Reading from the N-terminus, the 193-residue chain is Probable thymidylate kinase (193 aa).

7-14 (GIDGSGKT) is a binding site for ATP.

It belongs to the thymidylate kinase family.

The catalysed reaction is dTMP + ATP = dTDP + ADP. In Pyrobaculum calidifontis (strain DSM 21063 / JCM 11548 / VA1), this protein is Probable thymidylate kinase.